The chain runs to 508 residues: Pyruvate kinase 2 (508 aa).

Arg-50 serves as a coordination point for substrate. Asn-52, Ser-54, Asp-85, and Thr-86 together coordinate K(+). Residue 52 to 55 (NFSH) participates in ATP binding. ATP-binding residues include Arg-92 and Lys-178. Glu-243 contributes to the Mg(2+) binding site. Residues Gly-266, Asp-267, and Thr-299 each contribute to the substrate site. Asp-267 is a binding site for Mg(2+).

It belongs to the pyruvate kinase family. Homotetramer. Mg(2+) is required as a cofactor. Requires K(+) as cofactor.

It carries out the reaction pyruvate + ATP = phosphoenolpyruvate + ADP + H(+). It participates in carbohydrate degradation; glycolysis; pyruvate from D-glyceraldehyde 3-phosphate: step 5/5. This chain is Pyruvate kinase 2 (PYK2), found in Candida glabrata (strain ATCC 2001 / BCRC 20586 / JCM 3761 / NBRC 0622 / NRRL Y-65 / CBS 138) (Yeast).